We begin with the raw amino-acid sequence, 325 residues long: UPF0164 protein TP_0856 (325 aa).

The N-terminal stretch at 1–28 (MVHYKSVFYKSAALVCGFVLAGASVAIA) is a signal peptide.

It belongs to the UPF0164 family.

This chain is UPF0164 protein TP_0856, found in Treponema pallidum (strain Nichols).